The primary structure comprises 460 residues: TNF receptor-associated factor family protein DDB_G0290883 (460 aa).

The RING-type; degenerate zinc-finger motif lies at C27–K67. TRAF-type zinc fingers lie at residues S141 to L194 and T196 to Q253. The 129-residue stretch at G320–I448 folds into the MATH domain.

Belongs to the TNF receptor-associated factor family. A subfamily.

It localises to the cytoplasm. Functionally, probable adapter protein and signal transducer that links members of the tumor necrosis factor receptor family to different signaling pathways by association with the receptor cytoplasmic domain and kinases. The polypeptide is TNF receptor-associated factor family protein DDB_G0290883 (Dictyostelium discoideum (Social amoeba)).